We begin with the raw amino-acid sequence, 252 residues long: 5-oxoprolinase subunit A (252 aa).

Belongs to the LamB/PxpA family. In terms of assembly, forms a complex composed of PxpA, PxpB and PxpC.

The catalysed reaction is 5-oxo-L-proline + ATP + 2 H2O = L-glutamate + ADP + phosphate + H(+). Its function is as follows. Catalyzes the cleavage of 5-oxoproline to form L-glutamate coupled to the hydrolysis of ATP to ADP and inorganic phosphate. The sequence is that of 5-oxoprolinase subunit A from Mycobacterium marinum (strain ATCC BAA-535 / M).